Consider the following 691-residue polypeptide: MEKTESFCPEVPPQDCGASPRPSLRSLPKNQGSLLQFDRQAPGRISTSPTLRRLRTRGCGTRQDAWQVTTWGSWGAPVGFPCYLSKSLPGSPKDSSHLLSPLRLHSRLTSEPERALNAADSLEPQTRPTDKYLPPELQPVNEGSLHQASLRQQEGHFLPSPTLRHPSPQGEELHPSRFYEHRRSSVVLNLPGLEVFPGDLLVSDGAADYLCHPLLLLNSESKKPRWPFSKRGVGKDKHKHISDLENCLSSVKITSFRGYDFYGLKDKTWDEVLETHHKLPTDQLDLKKQQEAVWELFTSECTYFLDHLLVLKMIFMNTLRYLQTHEYLLDVDLWRLFANLEELTQTSLGFVNSLFGIIKDYVDASEISSSLDFISVLTKYFRGSLCQSHQTYCLNYSAAIFYLESLRQRDDFGIYLKWCEQNEQCRRLHVPELLVAPLQRLTRYPLLLKNIWKRSMDSAEKIMIYSIKEKVEKSIRDLEGKVKWLDNFQKFRYLQEIIVWPPLWDRDKRFFIPECLKHIFKEHMAENILSPTSRHLLYEGKLTLAESTRFLDVYLFLFNDFLLVTKTKCNKKKLGGSDPGLMCPSLTPELQAVIKEGGSCTVLDQPIPLDRLVVKSIEPLHVSVFGLRNAFLIQHENRYRQCIAAFLLQAQTENIKKTWMAQITTAISCFTKSQETKKISLFTLPAESSEI.

Disordered stretches follow at residues 1–48 (MEKT…ISTS) and 109–140 (TSEP…LQPV). Residues 313–488 (MIFMNTLRYL…EGKVKWLDNF (176 aa)) form the DH domain. Asn395 is a glycosylation site (N-linked (GlcNAc...) asparagine). Residues 535-668 (HLLYEGKLTL…WMAQITTAIS (134 aa)) enclose the PH domain.

This is Pleckstrin homology domain-containing family G member 7 from Homo sapiens (Human).